Consider the following 403-residue polypeptide: 3-(3-hydroxy-phenyl)propionate transporter (403 aa).

Residues 1–16 (MSTRTPSSSSSRLMLT) are Cytoplasmic-facing. The chain crosses the membrane as a helical span at residues 17 to 37 (IGLCFLVALMEGLDLQAAGIA). The Periplasmic segment spans residues 38-53 (AGGIAQAFALDKMQMG). A helical transmembrane segment spans residues 54 to 74 (WIFSAGILGLLPGALVGGMLA). At 75 to 81 (DRYGRKR) the chain is on the cytoplasmic side. The chain crosses the membrane as a helical span at residues 82–102 (ILIGSVALFGLFSLATAIAWD). Topologically, residues 103–105 (FPS) are periplasmic. Residues 106-126 (LVFARLMTGVGLGAALPNLIA) traverse the membrane as a helical segment. At 127 to 142 (LTSEAAGPRFRGTAVS) the chain is on the cytoplasmic side. A helical transmembrane segment spans residues 143 to 163 (LMYCGVPIGAALAATLGFAGA). Asn-164 is a topological domain (periplasmic). The chain crosses the membrane as a helical span at residues 165–185 (LAWQTVFWVGGVVPLILVPLL). Over 186-217 (MRWLPESAVFAGEKQSAPPLRALFAPETATAT) the chain is Cytoplasmic. The helical transmembrane segment at 218-238 (LLLWLCYFFTLLVVYMLINWL) threads the bilayer. Residues 239-253 (PLLLVEQGFQPSQAA) lie on the Periplasmic side of the membrane. Residues 254 to 274 (GVMFALQMGAASGTLMLGALM) traverse the membrane as a helical segment. The Cytoplasmic segment spans residues 275–279 (DKLRP). Residues 280–300 (VTMSLLIYSGMLASLLALGTV) form a helical membrane-spanning segment. Residues 301–306 (SSFNGM) lie on the Periplasmic side of the membrane. The helical transmembrane segment at 307–327 (LLAGFVAGLFATGGQSVLYAL) threads the bilayer. Topologically, residues 328–339 (APLFYSSQIRAT) are cytoplasmic. Residues 340 to 360 (GVGTAVAVGRLGAMSGPLLAG) traverse the membrane as a helical segment. Residues 361–369 (KMLALGTGT) are Periplasmic-facing. A helical transmembrane segment spans residues 370 to 390 (VGVMAASAPGILVAGLAVFIL). The Cytoplasmic portion of the chain corresponds to 391–403 (MSRRSRIQPCADA).

The protein belongs to the major facilitator superfamily. Aromatic acid:H(+) symporter (AAHS) (TC 2.A.1.15) family.

The protein resides in the cell inner membrane. The catalysed reaction is 3-(3-hydroxyphenyl)propanoate(in) + H(+)(in) = 3-(3-hydroxyphenyl)propanoate(out) + H(+)(out). With respect to regulation, inhibited by carbonyl cyanide m-chlorophenylhydrazone (CCCP), which dissipates the proton motive force. In terms of biological role, uptake of 3-(3-hydroxyphenyl)propionate (3HPP) across the cytoplasmic membrane. Transport is driven by the proton motive force. Does not transport benzoate, 3-hydroxybenzoate or gentisate. The sequence is that of 3-(3-hydroxy-phenyl)propionate transporter from Escherichia coli (strain K12).